Consider the following 594-residue polypeptide: Estrogen receptor (594 aa).

The segment at 1–184 is modulating (transactivation AF-1); mediates interaction with MACROD1; the sequence is MTMTLHTKAS…AMESAKETRY (184 aa). A glycan (O-linked (GlcNAc) serine) is linked at Ser10. The tract at residues 35–47 is required for interaction with NCOA1; it reads LERPLGEVYVESS. Residues 35–174 form an interaction with DDX5; self-association region; it reads LERPLGEVYV…LASSGDKGSM (140 aa). Phosphoserine; by CDK2 occurs at positions 104 and 106. At Ser118 the chain carries Phosphoserine. The segment at 152 to 173 is disordered; the sequence is PNADNRRQGGRERLASSGDKGS. Residues 154-165 show a composition bias toward basic and acidic residues; it reads ADNRRQGGRERL. At Ser167 the chain carries Phosphoserine; by CK2. 2 consecutive NR C4-type zinc fingers follow at residues 185 to 205 and 221 to 245; these read CAVC…CEGC and CPAT…LRKC. Residues 185–250 constitute a DNA-binding region (nuclear receptor); sequence CAVCNDYASG…RLRKCYEVGM (66 aa). Residues 185 to 310 form a mediates interaction with DNTTIP2 region; it reads CAVCNDYASG…TKKISPVLSL (126 aa). The segment at 251-310 is hinge; the sequence is MKGGIRKDRRGGRMLKHKRQRDDGEGRNEAGPSGDRRPANFWPSPLLIKHTKKISPVLSL. The span at 257 to 269 shows a compositional bias: basic residues; that stretch reads KDRRGGRMLKHKR. Residues 257–293 are disordered; that stretch reads KDRRGGRMLKHKRQRDDGEGRNEAGPSGDRRPANFWP. Position 260 is an asymmetric dimethylarginine; by PRMT1 (Arg260). The interval 262–594 is interaction with AKAP13; it reads GRMLKHKRQR…GEAEGFPNTI (333 aa). The self-association stretch occupies residues 264-594; it reads MLKHKRQRDD…GEAEGFPNTI (331 aa). Basic and acidic residues predominate over residues 270–288; it reads QRDDGEGRNEAGPSGDRRP. The region spanning 311 to 546 is the NR LBD domain; it reads TAEQMISALL…DLLLEMLDAH (236 aa). Residues 311–594 form a transactivation AF-2 region; the sequence is TAEQMISALL…GEAEGFPNTI (284 aa). Positions 353 and 394 each coordinate 17beta-estradiol. Residue Cys447 is the site of S-palmitoyl cysteine attachment. Residue His523 participates in 17beta-estradiol binding. Phosphotyrosine; by Tyr-kinases is present on Tyr536. Positions 551–575 are disordered; sequence PANHGGAPMEETNQSQLATTGSTSP. The segment covering 561–575 has biased composition (polar residues); the sequence is ETNQSQLATTGSTSP. Thr570 is a glycosylation site (O-linked (GlcNAc) threonine).

The protein belongs to the nuclear hormone receptor family. NR3 subfamily. Binds DNA as a homodimer. Can form a heterodimer with ESR2. Interacts with coactivator NCOA5. Interacts with PELP1, the interaction is enhanced by 17-beta-estradiol; the interaction increases ESR1 transcriptional activity. Interacts with NCOA7; the interaction is ligand-inducible. Interacts with AKAP13, CUEDC2, HEXIM1, KDM5A, MAP1S, SMARD1, and UBE1C. Interacts with MUC1; the interaction is stimulated by 7 beta-estradiol (E2) and enhances ESR1-mediated transcription. Interacts with DNTTIP2, and UIMC1. Interacts with KMT2D/MLL2. Interacts with ATAD2; the interaction is enhanced by estradiol. Interacts with KIF18A and LDB1. Interacts with RLIM (via its C-terminus). Interacts with MACROD1. Interacts with SH2D4A and PLCG. Interacts with SH2D4A; the interaction blocks binding to PLCG and inhibits estrogen-induced cell proliferation. Interacts with DYNLL1. Interacts with CCDC62; the interaction requires estradiol and appears to enhance the transcription of target genes. Interacts with NR2C1; the interaction prevents homodimerization of ESR1 and suppresses its transcriptional activity and cell growth. Interacts with DNAAF4. Interacts with PRMT2. Interacts with RBFOX2. Interacts with EP300; the interaction is estrogen-dependent and enhanced by CITED1. Interacts with CITED1; the interaction is estrogen-dependent. Interacts with FAM120B, FOXL2, PHB2 and SLC30A9. Interacts with coactivators NCOA3 and NCOA6. Interacts with STK3/MST2 only in the presence of SAV1 and vice-versa. Binds to CSNK1D. Interacts with NCOA2; NCOA2 can interact with ESR1 AF-1 and AF-2 domains simultaneously and mediate their transcriptional synergy. Interacts with DDX5. Interacts with NCOA1; the interaction seems to require a self-association of N-terminal and C-terminal regions. Interacts with ZNF366, DDX17, NFKB1, RELA, SP1 and SP3. Interacts with NRIP1. Interacts with GPER1; the interaction occurs in an estrogen-dependent manner. Interacts with CLOCK and the interaction is stimulated by estrogen. Interacts with TRIP4 (ufmylated); estrogen dependent. Interacts with LMTK3; the interaction phosphorylates ESR1 (in vitro) and protects it against proteasomal degradation. Interacts with CCAR2 (via N-terminus) in a ligand-independent manner. Interacts with ZFHX3. Interacts with SFR1 in a ligand-dependent and -independent manner. Interacts with DCAF13, LATS1 and DCAF1; regulates ESR1 ubiquitination and ubiquitin-mediated proteasomal degradation. Interacts (via DNA-binding domain) with POU4F2 (C-terminus); this interaction increases the estrogen receptor ESR1 transcriptional activity in a DNA- and ligand 17-beta-estradiol-independent manner. Interacts with ESRRB isoform 1. Interacts with UBE3A and WBP2. Interacts with GTF2B. Interacts with RBM39. In the absence of hormonal ligand, interacts with TACC1. Interacts with PI3KR1 or PI3KR2 and PTK2/FAK1. Interacts with SRC. Interacts with BAG1; the interaction is promoted in the absence of estradiol (17-beta-estradiol/E2). Interacts with and ubiquitinated by STUB1; the interaction is promoted in the absence of estradiol (17-beta-estradiol/E2). Interacts with NEDD8. Post-translationally, ubiquitinated; regulated by LATS1 via DCAF1 it leads to ESR1 proteasomal degradation. Deubiquitinated by OTUB1. Ubiquitinated by STUB1/CHIP; in the CA1 hippocampal region following loss of endogenous circulating estradiol (17-beta-estradiol/E2). Ubiquitinated by UBR5, leading to its degradation: UBR5 specifically recognizes and binds ligand-bound ESR1 when it is not associated with coactivators (NCOAs). In presence of NCOAs, the UBR5-degron is not accessible, preventing its ubiquitination and degradation. Phosphorylated by cyclin A/CDK2 and CK1. Phosphorylation probably enhances transcriptional activity. Dephosphorylation at Ser-118 by PPP5C inhibits its transactivation activity. Phosphorylated by LMTK3 (in vitro). In terms of processing, palmitoylated at Cys-447 by ZDHHC7 and ZDHHC21. Palmitoylation is required for plasma membrane targeting and for rapid intracellular signaling via ERK and AKT kinases and cAMP generation, but not for signaling mediated by the nuclear hormone receptor. Post-translationally, dimethylated by PRMT1 at Arg-260. The methylation may favor cytoplasmic localization. Demethylated by JMJD6 at Arg-260.

It is found in the nucleus. The protein localises to the cytoplasm. It localises to the golgi apparatus. The protein resides in the cell membrane. Functionally, nuclear hormone receptor. The steroid hormones and their receptors are involved in the regulation of eukaryotic gene expression and affect cellular proliferation and differentiation in target tissues. Ligand-dependent nuclear transactivation involves either direct homodimer binding to a palindromic estrogen response element (ERE) sequence or association with other DNA-binding transcription factors, such as AP-1/c-Jun, c-Fos, ATF-2, Sp1 and Sp3, to mediate ERE-independent signaling. Ligand binding induces a conformational change allowing subsequent or combinatorial association with multiprotein coactivator complexes through LXXLL motifs of their respective components. Mutual transrepression occurs between the estrogen receptor (ER) and NF-kappa-B in a cell-type specific manner. Decreases NF-kappa-B DNA-binding activity and inhibits NF-kappa-B-mediated transcription from the IL6 promoter and displace RELA/p65 and associated coregulators from the promoter. Recruited to the NF-kappa-B response element of the CCL2 and IL8 promoters and can displace CREBBP. Present with NF-kappa-B components RELA/p65 and NFKB1/p50 on ERE sequences. Can also act synergistically with NF-kappa-B to activate transcription involving respective recruitment adjacent response elements; the function involves CREBBP. Can activate the transcriptional activity of TFF1. Also mediates membrane-initiated estrogen signaling involving various kinase cascades. Essential for MTA1-mediated transcriptional regulation of BRCA1 and BCAS3. Maintains neuronal survival in response to ischemic reperfusion injury when in the presence of circulating estradiol (17-beta-estradiol/E2). The sequence is that of Estrogen receptor (ESR1) from Equus caballus (Horse).